The following is a 276-amino-acid chain: uncharacterized protein (276 aa).

Residues 1–19 (MKKWLICSFVLVLLVSFTA) form the signal peptide. A lipid anchor (N-palmitoyl cysteine) is attached at Cys-20. A lipid anchor (S-diacylglycerol cysteine) is attached at Cys-20.

Belongs to the NlpA lipoprotein family.

The protein resides in the cell membrane. This is an uncharacterized protein from Bacillus subtilis (strain 168).